The primary structure comprises 470 residues: Putative multidrug resistance protein MdtD (470 aa).

At 1–11 (MTELPDNTRWQ) the chain is on the periplasmic side. Residues 12-32 (LWIVAFGFFMQSLDTTIVNTA) form a helical membrane-spanning segment. Over 33–48 (LPSMAKSLGESPLHMH) the chain is Cytoplasmic. Residues 49-69 (MVVVSYVLTVAVMLPASGWLA) traverse the membrane as a helical segment. At 70–76 (DKIGVRN) the chain is on the periplasmic side. Residues 77–97 (IFFAAIVLFTLGSLFCALSGT) traverse the membrane as a helical segment. The Cytoplasmic portion of the chain corresponds to 98-101 (LNQL). A helical membrane pass occupies residues 102–124 (VLARVLQGVGGAMMVPVGRLTVM). The Periplasmic segment spans residues 125–137 (KIVPRAQYMAAMT). Residues 138-158 (FVTLPGQIGPLLGPALGGVLV) form a helical membrane-spanning segment. The Cytoplasmic segment spans residues 159–164 (EYASWH). Residues 165–185 (WIFLINIPVGIVGAMATFMLM) traverse the membrane as a helical segment. Residues 186-196 (PNYTIETRRFD) are Periplasmic-facing. A helical transmembrane segment spans residues 197-217 (LPGFLLLAIGMAVLTLALDGS). Topologically, residues 218–224 (KSMGISP) are cytoplasmic. A helical membrane pass occupies residues 225-245 (WTLAGLAAGGAAAILLYLFHA). At 246–262 (KKSSGALFSLRLFRTPT) the chain is on the periplasmic side. Residues 263–283 (FSLGLLGSFAGRIGSGMLPFM) traverse the membrane as a helical segment. The Cytoplasmic portion of the chain corresponds to 284-285 (TP). The chain crosses the membrane as a helical span at residues 286–306 (VFLQIGLGFSPFHAGLMMIPM). Residues 307-341 (VLGSMGMKRIVVQIVNRFGYRRVLVATTLGLALVS) lie on the Periplasmic side of the membrane. The helical transmembrane segment at 342–362 (LLFMSVALLGWYYLLPLVLLL) threads the bilayer. Residues 363 to 395 (QGMVNSARFSSMNTLTLKDLPDTLASSGNSLLS) lie on the Cytoplasmic side of the membrane. A helical membrane pass occupies residues 396-416 (MIMQLSMSIGVTIAGMLLGMF). Residues 417-430 (GQQHIGIDSSATHH) are Periplasmic-facing. The helical transmembrane segment at 431–451 (VFMYTWLCMAVIIALPAIIFA) threads the bilayer. Residues 452-470 (RVPNDTQQNMVISRRKRSL) lie on the Cytoplasmic side of the membrane.

Belongs to the major facilitator superfamily. TCR/Tet family.

It is found in the cell inner membrane. In Salmonella paratyphi A (strain ATCC 9150 / SARB42), this protein is Putative multidrug resistance protein MdtD.